The chain runs to 149 residues: Calmodulin (149 aa).

Residue Ala-2 is modified to N-acetylalanine. 4 EF-hand domains span residues 8-43 (EQIAEFKEAFSLFDKDGDGSITTKELGTVMRSLGQN), 44-79 (PTEAELQDMINEVDADGNGTIDFPEFLNLMARKMKD), 81-116 (DSEEELKEAFKVFDKDQNGYISAADWRHVMTNLGEK), and 117-149 (LTDEEVDEMIREADVDGDGQVNYEEFVKMMMAK). Ca(2+) is bound by residues Asp-21, Asp-23, Asp-25, Ser-27, Glu-32, Asp-57, Asp-59, Asn-61, Thr-63, Glu-68, Asp-94, Asp-96, Asn-98, Tyr-100, and Asp-105. Lys-116 carries the post-translational modification N6,N6,N6-trimethyllysine. Ca(2+)-binding residues include Asp-130, Asp-132, Asp-134, Gln-136, and Glu-141.

The protein belongs to the calmodulin family.

Its function is as follows. Calmodulin mediates the control of a large number of enzymes, ion channels and other proteins by Ca(2+). Among the enzymes to be stimulated by the calmodulin-Ca(2+) complex are a number of protein kinases and phosphatases. The polypeptide is Calmodulin (Mougeotia scalaris (Green alga)).